A 151-amino-acid polypeptide reads, in one-letter code: Transcriptional regulator SyrB (151 aa).

The disordered stretch occupies residues 1–61; that stretch reads MADESNTGPV…RYSEQERNDK (61 aa). The segment covering 33-48 has biased composition (low complexity); sequence PQKAAAEPAQPKAPAA. The segment covering 52–61 has biased composition (basic and acidic residues); sequence RYSEQERNDK.

The protein belongs to the SyrB family.

Its function is as follows. Responsible for the repression of SyrM activity. This is Transcriptional regulator SyrB (syrB) from Rhizobium meliloti (strain 1021) (Ensifer meliloti).